The chain runs to 291 residues: MAKLSPRDIKRKIQGIKNTQRITKAMKAVSAAKLNKAKAKLNATRPYSERLYDLINDLAMFVDRDIHPLLKIRDEHKVDIVVVTADRGLAGAFNSYVIKTTLGKVKELQEAGKDVNLILIGRKAVQFFKNKGFNIIAEYEDIYRDHMNLSFTSQVGGIIAERYENEKTDAVYLINNELITTATYETKVRKLFPIEPELDYTKLSEISRYNIEPSSEEVLEQLLKRYINFQLYRALVESSTAEHAARMIAMDNATRNAGEAIKRWTIIFNKARQEAITTELIDIINASNAIE.

Belongs to the ATPase gamma chain family. In terms of assembly, F-type ATPases have 2 components, CF(1) - the catalytic core - and CF(0) - the membrane proton channel. CF(1) has five subunits: alpha(3), beta(3), gamma(1), delta(1), epsilon(1). CF(0) has three main subunits: a, b and c.

It localises to the cell inner membrane. Its function is as follows. Produces ATP from ADP in the presence of a proton gradient across the membrane. The gamma chain is believed to be important in regulating ATPase activity and the flow of protons through the CF(0) complex. This is ATP synthase gamma chain from Persephonella marina (strain DSM 14350 / EX-H1).